The following is an 84-amino-acid chain: uncharacterized protein (84 aa).

The stretch at 5–31 forms a coiled coil; that stretch reads KIQEIINELDNLMNRERKYIELVATVE.

This is an uncharacterized protein from Methanocaldococcus jannaschii (strain ATCC 43067 / DSM 2661 / JAL-1 / JCM 10045 / NBRC 100440) (Methanococcus jannaschii).